Here is a 480-residue protein sequence, read N- to C-terminus: Adenosylhomocysteinase (480 aa).

Substrate contacts are provided by threonine 63, aspartate 142, and glutamate 203. Residue 204-206 (TTT) coordinates NAD(+). Residues lysine 233 and aspartate 237 each contribute to the substrate site. NAD(+) contacts are provided by residues asparagine 238, 267–272 (GYGDVG), glutamate 290, asparagine 325, 346–348 (IGH), and asparagine 394.

Belongs to the adenosylhomocysteinase family. NAD(+) is required as a cofactor.

The protein resides in the cytoplasm. The enzyme catalyses S-adenosyl-L-homocysteine + H2O = L-homocysteine + adenosine. It functions in the pathway amino-acid biosynthesis; L-homocysteine biosynthesis; L-homocysteine from S-adenosyl-L-homocysteine: step 1/1. May play a key role in the regulation of the intracellular concentration of adenosylhomocysteine. This is Adenosylhomocysteinase from Xanthomonas euvesicatoria pv. vesicatoria (strain 85-10) (Xanthomonas campestris pv. vesicatoria).